Here is a 187-residue protein sequence, read N- to C-terminus: GTP cyclohydrolase 1 (187 aa).

The Zn(2+) site is built by Cys-76, His-79, and Cys-148.

This sequence belongs to the GTP cyclohydrolase I family. As to quaternary structure, toroid-shaped homodecamer, composed of two pentamers of five dimers.

It catalyses the reaction GTP + H2O = 7,8-dihydroneopterin 3'-triphosphate + formate + H(+). It functions in the pathway cofactor biosynthesis; 7,8-dihydroneopterin triphosphate biosynthesis; 7,8-dihydroneopterin triphosphate from GTP: step 1/1. In Streptococcus agalactiae serotype III (strain NEM316), this protein is GTP cyclohydrolase 1.